A 432-amino-acid chain; its full sequence is N-acylneuraminate cytidylyltransferase (432 aa).

Substrate is bound by residues R39, N49, R98, S107, S109, and Q130. R188 is a catalytic residue.

The protein belongs to the CMP-NeuNAc synthase family. As to quaternary structure, homotetramer; the active enzyme is formed by a dimer of dimers. As to expression, expressed in testis, ovary and liver.

Its subcellular location is the nucleus. The catalysed reaction is an N-acylneuraminate + CTP = a CMP-N-acyl-beta-neuraminate + diphosphate. It participates in amino-sugar metabolism; N-acetylneuraminate metabolism. Catalyzes the activation of N-acetylneuraminic acid (NeuNAc) to cytidine 5'-monophosphate N-acetylneuraminic acid (CMP-NeuNAc), a substrate required for the addition of sialic acid. This is N-acylneuraminate cytidylyltransferase (cmas) from Oncorhynchus mykiss (Rainbow trout).